Here is a 599-residue protein sequence, read N- to C-terminus: Capsular polysaccharide biosynthesis protein CapD (599 aa).

Helical transmembrane passes span 12-32 (ILII…YAIL), 41-61 (IDLL…FAYV), 79-99 (SVLK…SLLI), and 102-122 (SPFL…IGGS).

It belongs to the polysaccharide synthase family.

It localises to the cell membrane. The protein operates within capsule biogenesis; capsule polysaccharide biosynthesis. Functionally, required for the biosynthesis of type 1 capsular polysaccharide. The sequence is that of Capsular polysaccharide biosynthesis protein CapD (capD) from Staphylococcus aureus.